A 333-amino-acid polypeptide reads, in one-letter code: Terpene synthase 2 (333 aa).

Residues 82 to 87 carry the DDxx(x)D/E motif motif; sequence DDDLDT. The short motif at 219 to 227 is the NDxxSxxxD/E motif element; the sequence is NDCVSYAKE.

The protein belongs to the terpene synthase family.

The catalysed reaction is (2E,6E)-farnesyl diphosphate = (E)-beta-farnesene + diphosphate. The enzyme catalyses (2E,6E)-farnesyl diphosphate = (1S,2S,4R)-beta-elemene + diphosphate. In terms of biological role, terpene synthase that converts its substrate farnesyl diphosphate (FPP) into the sesquiterpene (E)-beta-farnesene as major product. Is also able to convert FPP into delta-elemene, beta-elemene, (E)-beta-caryophyllene, 9-epi-(E)-caryophyllene, and a yet unidentified sesquiterpene. In Dictyostelium purpureum (Slime mold), this protein is Terpene synthase 2.